Reading from the N-terminus, the 139-residue chain is Large ribosomal subunit protein bL17 (139 aa).

This sequence belongs to the bacterial ribosomal protein bL17 family. As to quaternary structure, part of the 50S ribosomal subunit. Contacts protein L32.

This is Large ribosomal subunit protein bL17 from Azorhizobium caulinodans (strain ATCC 43989 / DSM 5975 / JCM 20966 / LMG 6465 / NBRC 14845 / NCIMB 13405 / ORS 571).